The following is a 395-amino-acid chain: Chorismate synthase (395 aa).

NADP(+) is bound at residue arginine 48. 125-127 (RSS) is a binding site for FMN. Positions 264 to 292 (RNEDWTFDDGESFDHVESEEGDPVPVGND) are disordered. Residues glycine 298, 313–317 (HAPTS), and arginine 340 each bind FMN. A disordered region spans residues 373–395 (PDRVDGNPGQYDTDYHPSSPDND).

Belongs to the chorismate synthase family. The cofactor is FMNH2.

It catalyses the reaction 5-O-(1-carboxyvinyl)-3-phosphoshikimate = chorismate + phosphate. It functions in the pathway metabolic intermediate biosynthesis; chorismate biosynthesis; chorismate from D-erythrose 4-phosphate and phosphoenolpyruvate: step 7/7. Catalyzes the anti-1,4-elimination of the C-3 phosphate and the C-6 proR hydrogen from 5-enolpyruvylshikimate-3-phosphate (EPSP) to yield chorismate, which is the branch point compound that serves as the starting substrate for the three terminal pathways of aromatic amino acid biosynthesis. This reaction introduces a second double bond into the aromatic ring system. The chain is Chorismate synthase from Halorubrum lacusprofundi (strain ATCC 49239 / DSM 5036 / JCM 8891 / ACAM 34).